A 214-amino-acid chain; its full sequence is Large ribosomal subunit protein uL3 (214 aa).

A disordered region spans residues 129 to 157; the sequence is FGRGPMSHGSKNHRRPGSIGAGTTPGRVF.

This sequence belongs to the universal ribosomal protein uL3 family. Part of the 50S ribosomal subunit. Forms a cluster with proteins L14 and L19.

Its function is as follows. One of the primary rRNA binding proteins, it binds directly near the 3'-end of the 23S rRNA, where it nucleates assembly of the 50S subunit. The protein is Large ribosomal subunit protein uL3 of Synechococcus sp. (strain JA-2-3B'a(2-13)) (Cyanobacteria bacterium Yellowstone B-Prime).